Consider the following 134-residue polypeptide: ATP synthase epsilon chain (134 aa).

Belongs to the ATPase epsilon chain family. As to quaternary structure, F-type ATPases have 2 components, CF(1) - the catalytic core - and CF(0) - the membrane proton channel. CF(1) has five subunits: alpha(3), beta(3), gamma(1), delta(1), epsilon(1). CF(0) has three main subunits: a, b and c.

It is found in the cell membrane. Functionally, produces ATP from ADP in the presence of a proton gradient across the membrane. This is ATP synthase epsilon chain from Clostridium botulinum (strain Eklund 17B / Type B).